The following is a 98-amino-acid chain: MSCYDLCRPSAPTPLANSCNEPCVRQCQDSRVVIQPSPVVVTLPGPILSSFPQNTAVGSSTSAAVGSILSEEGVPISSGGFGISGLGSRFSSRRCLPY.

S2 carries the post-translational modification N-acetylserine.

Belongs to the avian keratin family. The avian keratins (F-ker, S-ker, C-ker and B-ker) are a complex mixture of very similar polypeptides.

This Gallus gallus (Chicken) protein is Feather keratin 4.